The primary structure comprises 85 residues: Large ribosomal subunit protein bL27 (85 aa).

Residues 1–21 (MAHKKAGGSTRNGRDSNAQRL) form a disordered region. The span at 9–19 (STRNGRDSNAQ) shows a compositional bias: polar residues.

This sequence belongs to the bacterial ribosomal protein bL27 family.

The polypeptide is Large ribosomal subunit protein bL27 (Pectobacterium atrosepticum (strain SCRI 1043 / ATCC BAA-672) (Erwinia carotovora subsp. atroseptica)).